The following is a 339-amino-acid chain: Serpentine receptor class delta-19 (339 aa).

Transmembrane regions (helical) follow at residues 2–22 (IIFFEIWHWSWALLGCYLNLL), 39–59 (ATLIINFAATDFVECALDLFI), 90–110 (VGLSFLLHCLTHSVWSLLISF), 130–150 (ITIMFYIPSLVQALTYWTLFV), 187–207 (VYAVAHICLPFFPVYITIFVL), 242–262 (IIPMFLGIAVLLYFSSQSGLL), and 270–290 (SIFSVAILMPALSPITYLYFV).

It belongs to the nematode receptor-like protein srd family.

The protein resides in the membrane. The sequence is that of Serpentine receptor class delta-19 (srd-19) from Caenorhabditis elegans.